The sequence spans 834 residues: Dual specificity calcium/calmodulin-dependent 3',5'-cyclic nucleotide phosphodiesterase 1 (834 aa).

Residues 152–338 (HSHGRDDQQQ…DELSEVQPDA (187 aa)) are disordered. The span at 207-222 (THSGPTGPPSNTSSET) shows a compositional bias: low complexity. Positions 236–252 (TVRESVMEESPSKDPGD) are enriched in basic and acidic residues. Over residues 260–301 (STSTLTSQTTTSSSATAEPSAKAAESQAGSAGSSGSCSNPAA) the composition is skewed to low complexity. Residues 313–322 (WARSMSTNKT) show a composition bias toward polar residues. The interval 364–387 (EKPKFRSVAHAIRAGIFVDRMYRR) is calmodulin-binding. Residues 392–786 (ALTAFPPDVV…RIWKEQAVKD (395 aa)) enclose the PDEase domain. Histidine 469 functions as the Proton donor in the catalytic mechanism. Residues histidine 473, histidine 509, aspartate 510, and aspartate 617 each coordinate Zn(2+). Aspartate 510 contacts Mg(2+). 2 disordered regions span residues 720 to 744 (IVIP…AKTT) and 797 to 834 (EEAA…GAAA). Residues 732-741 (DKPRDHRTEA) are compositionally biased toward basic and acidic residues. Residues 823–834 (EPAAEPADGAAA) show a composition bias toward low complexity.

This sequence belongs to the cyclic nucleotide phosphodiesterase family. PDE1 subfamily. Requires Zn(2+) as cofactor. It depends on Mg(2+) as a cofactor. Expressed in the head (at protein level). Expressed in Malpighian tubules. Expressed in neurons in the brain and ventral ganglia with male flies having higher levels of expression in the abdominal ganglia compared to female flies.

It catalyses the reaction a nucleoside 3',5'-cyclic phosphate + H2O = a nucleoside 5'-phosphate + H(+). It carries out the reaction 3',5'-cyclic GMP + H2O = GMP + H(+). The catalysed reaction is 3',5'-cyclic AMP + H2O = AMP + H(+). With respect to regulation, type I PDE are activated by the binding of calmodulin in the presence of Ca(2+). Inhibited by zaprinast and sildenafil. In terms of biological role, cyclic nucleotide phosphodiesterase with a dual specificity for the second messengers cAMP and cGMP, which are key regulators of many important physiological processes. Required for male fertility and male mating behavior. This is Dual specificity calcium/calmodulin-dependent 3',5'-cyclic nucleotide phosphodiesterase 1 from Drosophila melanogaster (Fruit fly).